A 509-amino-acid chain; its full sequence is Methionine--tRNA ligase (509 aa).

The 'HIGH' region motif lies at Y12 to H22. Positions K295 to S299 match the 'KMSKS' region motif. An ATP-binding site is contributed by K298.

Belongs to the class-I aminoacyl-tRNA synthetase family. MetG type 2B subfamily. In terms of assembly, monomer.

It is found in the cytoplasm. It carries out the reaction tRNA(Met) + L-methionine + ATP = L-methionyl-tRNA(Met) + AMP + diphosphate. Is required not only for elongation of protein synthesis but also for the initiation of all mRNA translation through initiator tRNA(fMet) aminoacylation. The polypeptide is Methionine--tRNA ligase (Rickettsia bellii (strain RML369-C)).